The primary structure comprises 165 residues: GPI-anchored protein LORELEI (165 aa).

Residues 1–20 (MELILLFFFLMALLVSLSSS) form the signal peptide. Positions 82–93 (PYVSQINDMNSD) are required for its function in pollen tube reception. The N-linked (GlcNAc...) asparagine glycan is linked to asparagine 137. The GPI-anchor amidated serine moiety is linked to residue serine 139. A propeptide spans 140-165 (TADSTPRFISLLISAATAVFALLVLT) (removed in mature form).

In terms of assembly, interacts with FER. Expressed in leaves, buds, flowers and stems. Highest expression in the synergid cells of the female gametophyte.

The protein localises to the cell membrane. Its function is as follows. Female gametophyte-specific component of the signaling pathway required for fertilization. Required for reception of the pollen tube by the female gametophyte. Acts specifically at the synergid cell surface for pollen tube reception. Plays a role in double fertilization and early seed development. Component of the FER-regulated Rho GTPase signaling complex. Acts as a chaperone and coreceptor for FER. Required for localization of FER to the plasma membrane. The sequence is that of GPI-anchored protein LORELEI (LRE) from Arabidopsis thaliana (Mouse-ear cress).